Here is a 187-residue protein sequence, read N- to C-terminus: Elongation factor P 1 (187 aa).

The protein belongs to the elongation factor P family.

The protein localises to the cytoplasm. Its pathway is protein biosynthesis; polypeptide chain elongation. Functionally, involved in peptide bond synthesis. Stimulates efficient translation and peptide-bond synthesis on native or reconstituted 70S ribosomes in vitro. Probably functions indirectly by altering the affinity of the ribosome for aminoacyl-tRNA, thus increasing their reactivity as acceptors for peptidyl transferase. The chain is Elongation factor P 1 from Geobacter sulfurreducens (strain ATCC 51573 / DSM 12127 / PCA).